The sequence spans 360 residues: MKSSMLGRLEQLAHRLIEVDALLADPDSAGDMDRFRRLSRERAELEPVVLAFNAFQSTQADLATAQEMLADPEMKAMAEEEIKAARERIEVLEGELQVLLLPRDPNDGRSLFLEIRAGTGGDESALFSGDLLRMYSRYAESQGWRVEIMSESPSELGGYKEVIARIDGDGAYGRLKFESGAHRVQRVPATEAQGRIHTSACTVAVMPEADEMNDIVINPADLRIDTFRASGAGGQHINKTDSAVRITHLPTGLVVECQDDRSQHRNKDRAMQVLAARLKDKELRERQSKEAAERKSLVGSGDRSERIRTYNYPQGRVTDHRINLTLYKLQQILEGDLNELTGALLAEHQAEQLAALGEDI.

Gln-235 is modified (N5-methylglutamine). The disordered stretch occupies residues 284–303 (RERQSKEAAERKSLVGSGDR).

The protein belongs to the prokaryotic/mitochondrial release factor family. Post-translationally, methylated by PrmC. Methylation increases the termination efficiency of RF1.

Its subcellular location is the cytoplasm. Functionally, peptide chain release factor 1 directs the termination of translation in response to the peptide chain termination codons UAG and UAA. The polypeptide is Peptide chain release factor 1 (Bordetella avium (strain 197N)).